The chain runs to 212 residues: Cyclin-dependent kinase inhibitor 3 (212 aa).

Over residues 1 to 12 (MKPPSSIQTSEF) the composition is skewed to polar residues. A disordered region spans residues 1 to 23 (MKPPSSIQTSEFDSSDEEPIEDE). Positions 1-34 (MKPPSSIQTSEFDSSDEEPIEDEQTPIQISWLPL) are interaction with CDK2. Acidic residues predominate over residues 13 to 23 (DSSDEEPIEDE). In terms of domain architecture, Tyrosine-protein phosphatase spans 32–201 (LPLSRVNYSQ…FRDKLAAHLS (170 aa)). Residue Cys140 is the Phosphocysteine intermediate of the active site.

Belongs to the protein-tyrosine phosphatase family. As to quaternary structure, interacts with cyclin-dependent kinases such as CDK1, CDK2 and CDK3. Does not interact with CDK4. Interacts (via C-terminus) with phosphorylated CDK2 (via C-terminal helix). Interacts with MS4A3 (via C-terminus); the interaction enhances CDKN3 enzymatic activity.

Its subcellular location is the cytoplasm. The protein localises to the perinuclear region. It carries out the reaction O-phospho-L-tyrosyl-[protein] + H2O = L-tyrosyl-[protein] + phosphate. The enzyme catalyses O-phospho-L-seryl-[protein] + H2O = L-seryl-[protein] + phosphate. It catalyses the reaction O-phospho-L-threonyl-[protein] + H2O = L-threonyl-[protein] + phosphate. Its function is as follows. May play a role in cell cycle regulation. Dual specificity phosphatase active toward substrates containing either phosphotyrosine or phosphoserine residues. Dephosphorylates CDK2 at 'Thr-160' in a cyclin-dependent manner. The sequence is that of Cyclin-dependent kinase inhibitor 3 from Sus scrofa (Pig).